Reading from the N-terminus, the 105-residue chain is MAKMFDLRTKIMIGIGSSLLVAAMVLLSVVFCLYFKVAKALKAAKDPDAVAVKNHNPDKVCWATNSQAKATTMESCPSLQCCEGCRMHASSDSLPPCCCDINEGL.

Positions Met-1–Cys-32 are cleaved as a signal peptide.

The protein belongs to the FAM24 family.

The protein localises to the secreted. The sequence is that of Protein FAM24A (FAM24A) from Homo sapiens (Human).